The sequence spans 479 residues: Ribosomal RNA small subunit methyltransferase F (479 aa).

S-adenosyl-L-methionine is bound by residues 125–131 (AAAPGSK), Glu-149, Asp-176, and Asp-194. The active-site Nucleophile is the Cys-247.

Belongs to the class I-like SAM-binding methyltransferase superfamily. RsmB/NOP family.

It is found in the cytoplasm. The catalysed reaction is cytidine(1407) in 16S rRNA + S-adenosyl-L-methionine = 5-methylcytidine(1407) in 16S rRNA + S-adenosyl-L-homocysteine + H(+). In terms of biological role, specifically methylates the cytosine at position 1407 (m5C1407) of 16S rRNA. This is Ribosomal RNA small subunit methyltransferase F from Escherichia coli (strain SMS-3-5 / SECEC).